Consider the following 776-residue polypeptide: Kinesin-like protein KLP1 (776 aa).

In terms of domain architecture, Kinesin motor spans 5–335 (AVKVFVRTRP…LRFASRVRTL (331 aa)). 91 to 98 (GQTGAGKT) lines the ATP pocket. Residues 348 to 371 (ALLLRRYERQIKELKAELAMRDTL) are a coiled coil. The interval 441–535 (RRATEEGSGA…SNWGDAGPLS (95 aa)) is disordered. Residues 447-460 (GSGAAARGGDSAGP) show a composition bias toward low complexity. Residues 579-657 (ALADTKASIR…SLKSAREELE (79 aa)) adopt a coiled-coil conformation. The interval 658-776 (PQIQAVAVAR…TQAVNRGLAR (119 aa)) is globular.

The protein belongs to the TRAFAC class myosin-kinesin ATPase superfamily. Kinesin family.

It localises to the cytoplasm. The protein localises to the cytoskeleton. It is found in the flagellum axoneme. May play a role in rotation or twisting of the central pair microtubules of the flagella axoneme. The polypeptide is Kinesin-like protein KLP1 (KLP1) (Chlamydomonas reinhardtii (Chlamydomonas smithii)).